Reading from the N-terminus, the 194-residue chain is MLSSTLRVAVVCVSNVNRSMEAHSILRKKGLSVRSFGTESHVRLPGPRPNRPVVYDFATTYKEMYNDLLRKDRECYTRNGILHILGRNERIKPGPERFQECTDFFDVIFTCEESVYDTVVEDLCSREQQTFQPVHVINMEIQDTLEDATLGAFLICEICQCLQQSDDMEDNLEELLLQMEEKAGKSFLHTVCFY.

This sequence belongs to the SSU72 phosphatase family.

It is found in the nucleus. It catalyses the reaction O-phospho-L-seryl-[protein] + H2O = L-seryl-[protein] + phosphate. It carries out the reaction O-phospho-L-threonyl-[protein] + H2O = L-threonyl-[protein] + phosphate. Its function is as follows. Protein phosphatase that catalyzes the dephosphorylation of the C-terminal domain of RNA polymerase II. Plays a role in RNA processing and termination. The chain is RNA polymerase II subunit A C-terminal domain phosphatase SSU72 like protein 2 from Homo sapiens (Human).